Consider the following 381-residue polypeptide: Neuropeptide Y receptor type 2 (381 aa).

The interval 1–35 (MGPIGTEADENQTVEEMKVEQYGPQTTPRGELVPD) is disordered. The Extracellular segment spans residues 1–51 (MGPIGTEADENQTVEEMKVEQYGPQTTPRGELVPDPEPELIDSTKLIEVQV). A glycan (N-linked (GlcNAc...) asparagine) is linked at Asn11. Residues 52–72 (VLILAYCSIILLGVIGNSLVI) form a helical membrane-spanning segment. At 73–86 (HVVIKFKSMRTVTN) the chain is on the cytoplasmic side. A helical membrane pass occupies residues 87-107 (FFIANLAVADLVVNTLCLPFT). Residues 108–124 (LTYTLMGEWKMGPVLCH) lie on the Extracellular side of the membrane. A disulfide bond links Cys123 and Cys203. A helical membrane pass occupies residues 125–145 (LVPYAQGLAVQVSTITLTVIA). Over 146–165 (LDRHRCIVYHLESKISKRIS) the chain is Cytoplasmic. A helical transmembrane segment spans residues 166 to 186 (FLIIGLAWGISALLASPLAIF). Residues 187-216 (REYSLIEIIPDFEIVACTEKWPGEEKSIYG) lie on the Extracellular side of the membrane. A helical membrane pass occupies residues 217–237 (TVYSLSSLLILYVLPLGIISF). Topologically, residues 238–268 (SYTRIWSKLKSHVSPGAANDHYHQRRQKTTK) are cytoplasmic. A helical membrane pass occupies residues 269–289 (MLVCVVVVFAVSWLPLHAFQL). The Extracellular portion of the chain corresponds to 290 to 304 (AVDIDSHVLDLKEYK). The helical transmembrane segment at 305 to 325 (LIFTVFHIIAMCSTFANPLLY) threads the bilayer. Residues 326–381 (GWMNSNYRKAFLSAFRCEQRLDAIHSEVSVTFKAKKNLEVRKNSGPNDSFTEATNV) are Cytoplasmic-facing. Cys342 carries the S-palmitoyl cysteine lipid modification.

It belongs to the G-protein coupled receptor 1 family.

The protein resides in the cell membrane. In terms of biological role, receptor for neuropeptide Y and peptide YY. This Macaca mulatta (Rhesus macaque) protein is Neuropeptide Y receptor type 2 (NPY2R).